A 243-amino-acid chain; its full sequence is Zinc import ATP-binding protein ZnuC (243 aa).

Residues 25 to 242 (LVVDSITLFY…AKFMSVFPEN (218 aa)) form the ABC transporter domain. 57-64 (GPNGGGKT) is a binding site for ATP.

Belongs to the ABC transporter superfamily. Zinc importer (TC 3.A.1.15.5) family. The complex is composed of two ATP-binding proteins (ZnuC), two transmembrane proteins (ZnuB) and a solute-binding protein (ZnuA).

The protein resides in the cell inner membrane. It carries out the reaction Zn(2+)(out) + ATP(in) + H2O(in) = Zn(2+)(in) + ADP(in) + phosphate(in) + H(+)(in). Functionally, part of the ABC transporter complex ZnuABC involved in zinc import. Responsible for energy coupling to the transport system. In Anaplasma phagocytophilum (strain HZ), this protein is Zinc import ATP-binding protein ZnuC.